The chain runs to 156 residues: Ribosomal RNA large subunit methyltransferase H (156 aa).

Residues L73, G104, and 123–128 (LSPLTL) each bind S-adenosyl-L-methionine.

The protein belongs to the RNA methyltransferase RlmH family. Homodimer.

It is found in the cytoplasm. It catalyses the reaction pseudouridine(1915) in 23S rRNA + S-adenosyl-L-methionine = N(3)-methylpseudouridine(1915) in 23S rRNA + S-adenosyl-L-homocysteine + H(+). Specifically methylates the pseudouridine at position 1915 (m3Psi1915) in 23S rRNA. This chain is Ribosomal RNA large subunit methyltransferase H, found in Aliivibrio salmonicida (strain LFI1238) (Vibrio salmonicida (strain LFI1238)).